Here is a 176-residue protein sequence, read N- to C-terminus: RNA 2',3'-cyclic phosphodiesterase (176 aa).

His39 (proton donor) is an active-site residue. Short sequence motifs (HXTX) lie at residues 39–42 (HITL) and 122–125 (HLTV). Catalysis depends on His122, which acts as the Proton acceptor.

It belongs to the 2H phosphoesterase superfamily. ThpR family.

The catalysed reaction is a 3'-end 2',3'-cyclophospho-ribonucleotide-RNA + H2O = a 3'-end 2'-phospho-ribonucleotide-RNA + H(+). Hydrolyzes RNA 2',3'-cyclic phosphodiester to an RNA 2'-phosphomonoester. This Archaeoglobus fulgidus (strain ATCC 49558 / DSM 4304 / JCM 9628 / NBRC 100126 / VC-16) protein is RNA 2',3'-cyclic phosphodiesterase.